Here is a 311-residue protein sequence, read N- to C-terminus: tRNA-cytidine(32) 2-sulfurtransferase (311 aa).

The PP-loop motif signature appears at 47–52; the sequence is SGGKDS. [4Fe-4S] cluster-binding residues include C122, C125, and C213.

This sequence belongs to the TtcA family. In terms of assembly, homodimer. Requires Mg(2+) as cofactor. It depends on [4Fe-4S] cluster as a cofactor.

The protein localises to the cytoplasm. The enzyme catalyses cytidine(32) in tRNA + S-sulfanyl-L-cysteinyl-[cysteine desulfurase] + AH2 + ATP = 2-thiocytidine(32) in tRNA + L-cysteinyl-[cysteine desulfurase] + A + AMP + diphosphate + H(+). It functions in the pathway tRNA modification. In terms of biological role, catalyzes the ATP-dependent 2-thiolation of cytidine in position 32 of tRNA, to form 2-thiocytidine (s(2)C32). The sulfur atoms are provided by the cysteine/cysteine desulfurase (IscS) system. The polypeptide is tRNA-cytidine(32) 2-sulfurtransferase (Salmonella typhimurium (strain LT2 / SGSC1412 / ATCC 700720)).